A 394-amino-acid chain; its full sequence is Elongation factor Tu (394 aa).

Residues 10–204 (KPHLNVGTIG…ALDTYIPLPE (195 aa)) form the tr-type G domain. Positions 19-26 (GHVDHGKT) are G1. Position 19–26 (19–26 (GHVDHGKT)) interacts with GTP. Thr26 provides a ligand contact to Mg(2+). The tract at residues 60–64 (GITIN) is G2. The interval 81-84 (DCPG) is G3. GTP is bound by residues 81 to 85 (DCPGH) and 136 to 139 (NKCD). Residues 136 to 139 (NKCD) form a G4 region. Residues 174–176 (SAL) form a G5 region.

It belongs to the TRAFAC class translation factor GTPase superfamily. Classic translation factor GTPase family. EF-Tu/EF-1A subfamily. Monomer.

It is found in the cytoplasm. It catalyses the reaction GTP + H2O = GDP + phosphate + H(+). GTP hydrolase that promotes the GTP-dependent binding of aminoacyl-tRNA to the A-site of ribosomes during protein biosynthesis. The polypeptide is Elongation factor Tu (Psychromonas ingrahamii (strain DSM 17664 / CCUG 51855 / 37)).